Reading from the N-terminus, the 415-residue chain is MSLQAPKGTKDLLPTESYKWQYLENKFRNIAADFGCREIRTPVFEYTELFQRGVGETTDVVQKEMYTFEDKAGRSITLKPEGTSPAVRAFVEGRLFNETQPTKMYYFTPVMRYENVQKGRLRQHHQFGIEIFGAKDASVDAEVISIPVGIYKELGVEGVELNINSIGCPKCRKTYNEALKKYLSKNYDKLCSTCKTRFDKNPLRILDCKVDTCKEIVKDAPIILDYICDECKDHFEALKSYLDVLDIKYKVDPFIVRGLDYYSKTVFEFIIDDITICAGGRYDYLIEEIGGPSMPAVGFGMGIERLLLTLQEKAIEIPEEAYVDLYLGNMGDKAKLEVLKLAKELRDRHIKCEIDHMGKSVKAQMKYANRIGAKYSMVLGEEELNTGKVSLKRMEDGQQIEVDIKEIDTLIKVFK.

It belongs to the class-II aminoacyl-tRNA synthetase family. Homodimer.

The protein resides in the cytoplasm. The enzyme catalyses tRNA(His) + L-histidine + ATP = L-histidyl-tRNA(His) + AMP + diphosphate + H(+). The polypeptide is Histidine--tRNA ligase (Clostridium botulinum (strain ATCC 19397 / Type A)).